The following is a 229-amino-acid chain: Large ribosomal subunit protein uL1 (229 aa).

It belongs to the universal ribosomal protein uL1 family. As to quaternary structure, part of the 50S ribosomal subunit.

Binds directly to 23S rRNA. The L1 stalk is quite mobile in the ribosome, and is involved in E site tRNA release. Its function is as follows. Protein L1 is also a translational repressor protein, it controls the translation of the L11 operon by binding to its mRNA. The chain is Large ribosomal subunit protein uL1 from Clostridium botulinum (strain Loch Maree / Type A3).